We begin with the raw amino-acid sequence, 431 residues long: Levansucrase LscB (431 aa).

Sucrose-binding residues include W61, D62, A148, R218, and D219. The active-site Nucleophile is D62. E303 functions as the Proton donor/acceptor in the catalytic mechanism.

This sequence belongs to the glycosyl hydrolase 68 family.

The protein localises to the secreted. The enzyme catalyses [6)-beta-D-fructofuranosyl-(2-&gt;](n) alpha-D-glucopyranoside + sucrose = [6)-beta-D-fructofuranosyl-(2-&gt;](n+1) alpha-D-glucopyranoside + D-glucose. In terms of biological role, catalyzes the synthesis of levan, a fructose polymer, by transferring the fructosyl moiety from sucrose to a growing acceptor molecule. This chain is Levansucrase LscB, found in Pseudomonas savastanoi pv. glycinea (Pseudomonas syringae pv. glycinea).